The chain runs to 184 residues: ATP synthase subunit b, chloroplastic (184 aa).

The chain crosses the membrane as a helical span at residues 27-49; sequence LATNPINLSVVLGVLIFFGKGVL.

It belongs to the ATPase B chain family. In terms of assembly, F-type ATPases have 2 components, F(1) - the catalytic core - and F(0) - the membrane proton channel. F(1) has five subunits: alpha(3), beta(3), gamma(1), delta(1), epsilon(1). F(0) has four main subunits: a(1), b(1), b'(1) and c(10-14). The alpha and beta chains form an alternating ring which encloses part of the gamma chain. F(1) is attached to F(0) by a central stalk formed by the gamma and epsilon chains, while a peripheral stalk is formed by the delta, b and b' chains.

The protein resides in the plastid. It is found in the chloroplast thylakoid membrane. Functionally, f(1)F(0) ATP synthase produces ATP from ADP in the presence of a proton or sodium gradient. F-type ATPases consist of two structural domains, F(1) containing the extramembraneous catalytic core and F(0) containing the membrane proton channel, linked together by a central stalk and a peripheral stalk. During catalysis, ATP synthesis in the catalytic domain of F(1) is coupled via a rotary mechanism of the central stalk subunits to proton translocation. In terms of biological role, component of the F(0) channel, it forms part of the peripheral stalk, linking F(1) to F(0). The protein is ATP synthase subunit b, chloroplastic of Pelargonium hortorum (Common geranium).